Here is a 51-residue protein sequence, read N- to C-terminus: uncharacterized protein (51 aa).

Residues 20 to 42 traverse the membrane as a helical segment; that stretch reads NFFSRMWNAVVFGFGAAIGASVA.

The protein localises to the membrane. This is an uncharacterized protein from Schizosaccharomyces pombe (strain 972 / ATCC 24843) (Fission yeast).